Here is a 692-residue protein sequence, read N- to C-terminus: Elongation factor G (692 aa).

Positions 8–283 (DRYRNIGIMA…AVVDFLPSPL (276 aa)) constitute a tr-type G domain. GTP-binding positions include 17-24 (AHIDAGKT), 81-85 (DTPGH), and 135-138 (NKMD).

Belongs to the TRAFAC class translation factor GTPase superfamily. Classic translation factor GTPase family. EF-G/EF-2 subfamily.

The protein localises to the cytoplasm. Functionally, catalyzes the GTP-dependent ribosomal translocation step during translation elongation. During this step, the ribosome changes from the pre-translocational (PRE) to the post-translocational (POST) state as the newly formed A-site-bound peptidyl-tRNA and P-site-bound deacylated tRNA move to the P and E sites, respectively. Catalyzes the coordinated movement of the two tRNA molecules, the mRNA and conformational changes in the ribosome. This chain is Elongation factor G, found in Rhodospirillum rubrum (strain ATCC 11170 / ATH 1.1.1 / DSM 467 / LMG 4362 / NCIMB 8255 / S1).